Consider the following 1394-residue polypeptide: ABC transporter patM (1394 aa).

Positions 1–41 are disordered; sequence MVDNYHSSLDVAKTPIQSDADAQKSEAETEGPSSKSSQIAA. Residues 98 to 341 enclose the ABC transporter 1 domain; that stretch reads SPLQNRQRKQ…FEDLGFECLS (244 aa). 6 consecutive transmembrane segments (helical) span residues 437–457, 467–487, 511–531, 546–566, 579–599, and 688–708; these read SLWA…GTLF, LFIF…QSMA, IAYA…AICY, GNFF…SMFF, AVLP…LYVP, and VGIN…GMEM. Residues 727–755 form a disordered region; that stretch reads VTHRRDKIDSETGQDQGNESSEMSAGQSN. Polar residues predominate over residues 737-755; it reads ETGQDQGNESSEMSAGQSN. The region spanning 767 to 1013 is the ABC transporter 2 domain; the sequence is DKSHNLAWTN…EAIQYFQPRS (247 aa). Position 808–815 (808–815) interacts with ATP; that stretch reads GVSGAGKT. 6 consecutive transmembrane segments (helical) span residues 1131–1151, 1177–1197, 1219–1239, 1245–1265, 1280–1300, and 1368–1388; these read GAYN…PLGL, LAFV…SSLV, FLMY…CASL, AAFA…GTLS, ISPL…DLPI, and IGVF…MTYL.

The protein belongs to the ABC transporter superfamily. ABCG family. PDR (TC 3.A.1.205) subfamily.

It is found in the vacuole membrane. The protein localises to the cell membrane. It functions in the pathway mycotoxin biosynthesis; patulin biosynthesis. Functionally, ABC transporter; part of the gene cluster that mediates the biosynthesis of patulin, an acetate-derived tetraketide mycotoxin produced by several fungal species that shows antimicrobial properties against several bacteria. May be involved in the secretion of E-ascladiol to be converted to patulin by the secreted patulin synthase patE. The polypeptide is ABC transporter patM (Penicillium expansum (Blue mold rot fungus)).